The sequence spans 521 residues: GMP synthase [glutamine-hydrolyzing] (521 aa).

Residues 8 to 203 (KILILDFGAQ…VVDVCGCQTL (196 aa)) form the Glutamine amidotransferase type-1 domain. The Nucleophile role is filled by C85. Catalysis depends on residues H177 and E179. Residues 204 to 396 (WTAANIIDDQ…LGLPRTMVYR (193 aa)) form the GMPS ATP-PPase domain. 231–237 (SGGVDSS) contributes to the ATP binding site.

As to quaternary structure, homodimer.

The catalysed reaction is XMP + L-glutamine + ATP + H2O = GMP + L-glutamate + AMP + diphosphate + 2 H(+). The protein operates within purine metabolism; GMP biosynthesis; GMP from XMP (L-Gln route): step 1/1. Catalyzes the synthesis of GMP from XMP. The sequence is that of GMP synthase [glutamine-hydrolyzing] from Stenotrophomonas maltophilia (strain R551-3).